A 283-amino-acid chain; its full sequence is Bifunctional protein FolD (283 aa).

NADP(+)-binding positions include 165 to 167 and Ser-190; that span reads GAS.

Belongs to the tetrahydrofolate dehydrogenase/cyclohydrolase family. In terms of assembly, homodimer.

It carries out the reaction (6R)-5,10-methylene-5,6,7,8-tetrahydrofolate + NADP(+) = (6R)-5,10-methenyltetrahydrofolate + NADPH. The catalysed reaction is (6R)-5,10-methenyltetrahydrofolate + H2O = (6R)-10-formyltetrahydrofolate + H(+). The protein operates within one-carbon metabolism; tetrahydrofolate interconversion. Functionally, catalyzes the oxidation of 5,10-methylenetetrahydrofolate to 5,10-methenyltetrahydrofolate and then the hydrolysis of 5,10-methenyltetrahydrofolate to 10-formyltetrahydrofolate. In Cupriavidus taiwanensis (strain DSM 17343 / BCRC 17206 / CCUG 44338 / CIP 107171 / LMG 19424 / R1) (Ralstonia taiwanensis (strain LMG 19424)), this protein is Bifunctional protein FolD.